Consider the following 572-residue polypeptide: Glutathione hydrolase 1 (572 aa).

The signal sequence occupies residues 1–22; sequence MSLVRTVTIVLFIIAFLQNAAA. Arg99 contributes to the L-glutamate binding site. Asn171 and Asn222 each carry an N-linked (GlcNAc...) asparagine glycan. The active-site Nucleophile is Thr368. Residues Thr386, Asn388, Glu407, Asp410, 440–441, and 461–462 contribute to the L-glutamate site; these read SS and GG. Residue Asn505 is glycosylated (N-linked (GlcNAc...) asparagine). Residues 552–572 form a disordered region; sequence GGRSELVAVSDPRKGGFPSGY.

This sequence belongs to the gamma-glutamyltransferase family. As to expression, expressed in embryo, roots and leaves. In mature plants, expression is restricted to vascular tissues of roots, leaves, flowers and siliques.

The protein resides in the secreted. Its subcellular location is the extracellular space. The protein localises to the apoplast. The catalysed reaction is an N-terminal (5-L-glutamyl)-[peptide] + an alpha-amino acid = 5-L-glutamyl amino acid + an N-terminal L-alpha-aminoacyl-[peptide]. The enzyme catalyses glutathione + H2O = L-cysteinylglycine + L-glutamate. It catalyses the reaction an S-substituted glutathione + H2O = an S-substituted L-cysteinylglycine + L-glutamate. The protein operates within sulfur metabolism; glutathione metabolism. Its function is as follows. May play a role in preventing oxidative stress by metabolizing extracellular oxidized glutathione (GSSG). This is Glutathione hydrolase 1 (GGT1) from Arabidopsis thaliana (Mouse-ear cress).